The following is a 747-amino-acid chain: ATPase family gene 2 protein homolog B (747 aa).

The residue at position 1 (M1) is an N-acetylmethionine. Residues 234–241 (GPPGVGKT) and 500–507 (GPPGCAKT) contribute to the ATP site.

Belongs to the AAA ATPase family. AFG2 subfamily. As to quaternary structure, part of the 55LCC heterohexameric ATPase complex composed at least of AIRIM, AFG2A, AFG2B and CINP. Associates with pre-60S ribosomal particles. In adult ear, expressed at low levels in neurosensory hair cells (inner and outer) and supporting cells (pillar and Deiter cells).

It is found in the cytoplasm. Its subcellular location is the cytoskeleton. The protein resides in the spindle. The protein localises to the nucleus. The enzyme catalyses ATP + H2O = ADP + phosphate + H(+). Its activity is regulated as follows. In the context of 55LCC heterohexameric ATPase complex, the ATPase activity is stimulated by DNA binding and inhibited in presence of RNA. ATP-dependent chaperone part of the 55LCC heterohexameric ATPase complex which is chromatin-associated and promotes replisome proteostasis to maintain replication fork progression and genome stability. Required for replication fork progression, sister chromatid cohesion, and chromosome stability. The ATPase activity is specifically enhanced by replication fork DNA and is coupled to cysteine protease-dependent cleavage of replisome substrates in response to replication fork damage. Uses ATPase activity to process replisome substrates in S-phase, facilitating their proteolytic turnover from chromatin to ensure DNA replication and mitotic fidelity. Plays an essential role in the cytoplasmic maturation steps of pre-60S ribosomal particles by promoting the release of shuttling protein RSL24D1/RLP24 from the pre-ribosomal particles. This chain is ATPase family gene 2 protein homolog B (Afg2b), found in Mus musculus (Mouse).